The following is a 148-amino-acid chain: Large ribosomal subunit protein bL9 (148 aa).

The protein belongs to the bacterial ribosomal protein bL9 family.

Its function is as follows. Binds to the 23S rRNA. The protein is Large ribosomal subunit protein bL9 of Pelotomaculum thermopropionicum (strain DSM 13744 / JCM 10971 / SI).